The primary structure comprises 102 residues: Carboxysome shell protein CcmK3 (102 aa).

Residues 4 to 90 enclose the BMC domain; sequence AVGTIQTLGF…PQENVETVMP (87 aa).

It belongs to the bacterial microcompartments protein family. CcmK subfamily. In terms of assembly, interacts stably with CcmK4, probably forms heterohexamers with a 1:2 CcmK3:CcmK4 stoichiometry. Bulky residues in the pore region probably preclude the formation of homohexamers by this subunit.

Its subcellular location is the carboxysome. Its function is as follows. A non-essential, minor shell protein of the carboxysome, a polyhedral inclusion where RuBisCO (ribulose bisphosphate carboxylase, rbcL-rbcS) is sequestered. Hexamers form sheets that form the facets of the polyhedral carboxysome. In PCC 7942 there are several CcmK paralogs with presumably functional differences. This subunit probably only makes heterohexamers with CcmK4. The CcmK3-CcmK4 heterohexmers have been suggested to cap other hexamers, perhaps to alter metabolite flux. The protein is Carboxysome shell protein CcmK3 of Synechococcus elongatus (strain ATCC 33912 / PCC 7942 / FACHB-805) (Anacystis nidulans R2).